The chain runs to 253 residues: CD151 antigen (253 aa).

At 1–18 the chain is on the cytoplasmic side; it reads MGEFNEKKATCGTVCLKY. Residues Cys11 and Cys15 are each lipidated (S-palmitoyl cysteine). The chain crosses the membrane as a helical span at residues 19 to 39; it reads LLFTYNCCFWLAGLAVMAVGI. Residues 40–57 are Extracellular-facing; it reads WTLALKSDYISLLASSTY. Residues 58–78 form a helical membrane-spanning segment; it reads LATAYILVVAGVVVMVTGVLG. The Cytoplasmic segment spans residues 79–91; that stretch reads CCATFKERRNLLR. The helical transmembrane segment at 92 to 112 threads the bilayer; that stretch reads LYFILLLIIFLLEIIAGILAY. Over 113-221 the chain is Extracellular; it reads VYYQQLNTEL…LESFIQEHLR (109 aa). An N-linked (GlcNAc...) asparagine glycan is attached at Asn159. Residues 222–242 traverse the membrane as a helical segment; that stretch reads VIGAVGIGIACVQVFGMIFTC. S-palmitoyl cysteine attachment occurs at residues Cys242 and Cys243. The Cytoplasmic portion of the chain corresponds to 243–253; sequence CLYRSLKLEHY.

This sequence belongs to the tetraspanin (TM4SF) family. As to quaternary structure, interacts with integrins ITGA3:ITGB1, ITGA5:ITGB1, ITGA3:ITGB1 and ITGA6:ITGB4 and with CD9 and CD181. Interacts (via the second extracellular domain) with integrin ITGAV:ITGB3. Interacts with ITGA3; this interaction modulates ITGA3 glycosylation pattern. Interacts with F11R. Interacts with RAC1 and CDC42; these interactions mediate physical association of RAC1 and CDC42 with integrin adhesion receptor complexes. Palmitoylated. Palmitoylation by ZDHHC2 regulates CD151 expression, association with other tetraspanin family proteins and function in cell adhesion. In terms of processing, ubiquitinated by RNF128 on lysine residues present in the tetraspanin amino terminus via 'Lys-48'-linked ubiquitin leading to proteasomal degradation.

The protein localises to the cell membrane. In terms of biological role, structural component of specialized membrane microdomains known as tetraspanin-enriched microdomains (TERMs), which act as platforms for receptor clustering and signaling. Plays a role in various cellular and molecular mechanism through its association with both integrin and non-integrin proteins. These interactions facilitate critical cellular functions, including cell-to-cell communication, wound healing, platelet aggregation, trafficking, cell motility, and angiogenesis. Via interaction with JAM-A/F11R and integrin ITGA3:ITGB1, promotes the recruitment of signaling molecules such as RAC1, CDC42 and RhoGTPases to facilitate the polarization of epithelial cells and the reorganization of the actin cytoskeleton, which are critical steps in cell migration process. Regulates the glycosylation pattern of ITGA3:ITGB1 thereby modulating its activity. Plays an essential role in the maintenance of central laminin-binding integrin ITGA6:ITGB4-containing adhesion complexes. Essential for the proper assembly of the glomerular and tubular basement membranes in kidney. Contributes to T-cell activation by modulating integrin signaling leading to activation of downstream targets PTK2 and MAPK1/MAPK3. The sequence is that of CD151 antigen (Cd151) from Rattus norvegicus (Rat).